We begin with the raw amino-acid sequence, 492 residues long: Beta-Ala-His dipeptidase (492 aa).

H107 provides a ligand contact to Zn(2+). D109 is an active-site residue. A Zn(2+)-binding site is contributed by D140. The active-site Proton acceptor is the E174. E175 is a Zn(2+) binding site. S194 carries the post-translational modification Phosphoserine. The Zn(2+) site is built by D203 and H453.

The protein belongs to the peptidase M20A family. As to quaternary structure, homodimer. Zn(2+) serves as cofactor. As to expression, detected exclusively in kidney.

The protein localises to the secreted. It carries out the reaction Preferential hydrolysis of the beta-Ala-|-His dipeptide (carnosine), and also anserine, Xaa-|-His dipeptides and other dipeptides including homocarnosine.. It catalyses the reaction carnosine + H2O = beta-alanine + L-histidine. The catalysed reaction is anserine + H2O = N(pros)-methyl-L-histidine + beta-alanine. The enzyme catalyses L-alanyl-L-histidine + H2O = L-histidine + L-alanine. It carries out the reaction glycyl-L-histidine + H2O = L-histidine + glycine. It catalyses the reaction L-homocarnosine + H2O = 4-aminobutanoate + L-histidine. Catalyzes the peptide bond hydrolysis in Xaa-His dipeptides, displaying the highest activity toward carnosine (beta-alanyl-L-histidine) and anserine (beta-alanyl-3-methyl-histidine). The protein is Beta-Ala-His dipeptidase (Cndp1) of Mus musculus (Mouse).